A 560-amino-acid polypeptide reads, in one-letter code: 2-succinylbenzoate--CoA ligase, chloroplastic/peroxisomal (560 aa).

The N-terminal 15 residues, 1–15 (MANHSRPHICQCLTR), are a transit peptide targeting the chloroplast. 3 consecutive transmembrane segments (helical) span residues 69–89 (LFLE…PLNY), 189–209 (GVTI…AIAG), and 225–245 (IGGL…VLLP). Residues 558-560 (SSL) carry the Microbody targeting signal motif.

Belongs to the ATP-dependent AMP-binding enzyme family. MenE subfamily. As to expression, high expression in young leaves and flowers. Not expressed in roots.

The protein resides in the plastid. It is found in the chloroplast membrane. It localises to the peroxisome membrane. The catalysed reaction is 2-succinylbenzoate + ATP + CoA = 2-succinylbenzoyl-CoA + AMP + diphosphate. Involved in the biosynthesis of phylloquinone (vitamin K1). Converts 2-succinylbenzoate (OSB) to 2-succinylbenzoyl-CoA (OSB-CoA). This Arabidopsis thaliana (Mouse-ear cress) protein is 2-succinylbenzoate--CoA ligase, chloroplastic/peroxisomal (AAE14).